Reading from the N-terminus, the 228-residue chain is Somatolactin (228 aa).

An N-terminal signal peptide occupies residues Met-1–Gly-24. 3 cysteine pairs are disulfide-bonded: Cys-29-Cys-38, Cys-88-Cys-200, and Cys-217-Cys-225. Asn-141 and Asn-177 each carry an N-linked (GlcNAc...) asparagine glycan.

This sequence belongs to the somatotropin/prolactin family.

It is found in the secreted. The protein is Somatolactin of Anguilla anguilla (European freshwater eel).